A 263-amino-acid chain; its full sequence is Acyl-[acyl-carrier-protein]--UDP-N-acetylglucosamine O-acyltransferase (263 aa).

Belongs to the transferase hexapeptide repeat family. LpxA subfamily. As to quaternary structure, homotrimer.

It is found in the cytoplasm. It carries out the reaction a (3R)-hydroxyacyl-[ACP] + UDP-N-acetyl-alpha-D-glucosamine = a UDP-3-O-[(3R)-3-hydroxyacyl]-N-acetyl-alpha-D-glucosamine + holo-[ACP]. It participates in glycolipid biosynthesis; lipid IV(A) biosynthesis; lipid IV(A) from (3R)-3-hydroxytetradecanoyl-[acyl-carrier-protein] and UDP-N-acetyl-alpha-D-glucosamine: step 1/6. In terms of biological role, involved in the biosynthesis of lipid A, a phosphorylated glycolipid that anchors the lipopolysaccharide to the outer membrane of the cell. This is Acyl-[acyl-carrier-protein]--UDP-N-acetylglucosamine O-acyltransferase from Campylobacter lari (strain RM2100 / D67 / ATCC BAA-1060).